A 146-amino-acid chain; its full sequence is Snaclec CTL-Eoc124 (146 aa).

An N-terminal signal peptide occupies residues 1–23 (MGRFISVSFGLLVVFLSLSGTGA). 3 disulfide bridges follow: Cys-25–Cys-36, Cys-53–Cys-142, and Cys-119–Cys-134. The C-type lectin domain occupies 32 to 143 (YQGHCYRVFN…CSRTNNVACK (112 aa)).

This sequence belongs to the snaclec family. As to quaternary structure, heterodimer; disulfide-linked. As to expression, expressed by the venom gland.

The protein resides in the secreted. Functionally, interferes with one step of hemostasis (modulation of platelet aggregation, or coagulation cascade, for example). The protein is Snaclec CTL-Eoc124 of Echis ocellatus (Ocellated saw-scaled viper).